The following is a 1239-amino-acid chain: Codanin-1 (1239 aa).

N-acetylalanine is present on A2. Residues S61–A72 are compositionally biased toward polar residues. Disordered regions lie at residues S61–C249 and K261–A299. A Phosphothreonine modification is found at T70. Low complexity-rich tracts occupy residues A77–P88, A95–R116, and G138–L179. The interval A193–L213 is interaction with ASF1A/B. Over residues C219 to T238 the composition is skewed to polar residues. S270 carries the phosphoserine modification. 2 consecutive transmembrane segments (helical) span residues C317–L337 and F631–L651.

As to quaternary structure, interacts with ASF1A and ASF1B. Found in a cytosolic complex with ASF1A, ASF1B, IPO4 and histones H3.1 and H4. In terms of tissue distribution, widely expressed in adult mice, the highest levels can be measured in erythropoietic cells.

It localises to the cytoplasm. Its subcellular location is the nucleus. The protein localises to the membrane. Functionally, may act as a negative regulator of ASF1 in chromatin assembly. This is Codanin-1 (Cdan1) from Mus musculus (Mouse).